The following is an 838-amino-acid chain: MGEISPRGGDFDIDYILENASSLEKISLLAGHDFWHTAPLPRFNVPSVRVSDGPNGVRGTKFFDGVRAACLPCGTGLAATWDQSLLFDAGVLIGQECLAKGAHCWLGPTVCIQRSPLGGRGFESFAEDPYATGKLAAAYIRGAQSTGVISTIKHFAANDQEHERISVNAVMSERALREVHLLPFQIAIADAAPGAVMTCYNKINGQHVSESKEMLDGLLRKEWGWKGLIMSDWFGTYSTAEALNAGLDLEMPGPTRLRGPLLELAISSRKVSRSTLDERARTVLEFVKRANKAEVSTVESTRDFPEDRRLNRKLAADSIVLLKNESGLLPLNLKALKSAALIGPNMKTAAFCGGGSASLQPYYSISPYQGIMNQLPPGVEIIYETGASSYVFIPELEASEVRTPEGQPGLRMRFYREPPSVKERRVVEETILQESSWQLMGFSNPQLDRLFYADIEAELIAPATGPFEFGLAVYGSGSLFIDDQLIIDNTTVQRGGNFFFGKGTREEKATVDLVKGQLYKIRVEFASGPSSKLMKPGVVNFGGGAGRLGMVQAIDPELAIARAVEAAKRADVTILGVGLTRDHESEGFDRSHMDLPPAVASLVTAVLDVAPDAILMTQSGTPFNMLPWADNVKTHLHAWFGGNELGNGIADVLFGVVNPSGKLPLSFPRRIEDTPTYLNFGSERGQVTYGEGIYVGYRYYEKVLRDVLYPFGHGLSYTSFAYSDFAVDTASATLNVRNSGDVAGAEVVQLYIAADATTSSIARPVKELKGFAKVTLQPGETCSVSIPFDRFTTAFWDQEAHVWTCEKGQYRVMVGSSSQNILLEGVLEIKETTTWSGL.

N-linked (GlcNAc...) asparagine glycosylation is present at N19. The active site involves D232. 2 N-linked (GlcNAc...) asparagine glycosylation sites follow: N324 and N489. The PA14 domain maps to 405–564 (EGQPGLRMRF…DPELAIARAV (160 aa)).

This sequence belongs to the glycosyl hydrolase 3 family.

It localises to the secreted. It catalyses the reaction Hydrolysis of terminal, non-reducing beta-D-glucosyl residues with release of beta-D-glucose.. The protein operates within glycan metabolism; cellulose degradation. Its function is as follows. Beta-glucosidases are one of a number of cellulolytic enzymes involved in the degradation of cellulosic biomass. Catalyzes the last step releasing glucose from the inhibitory cellobiose. The protein is Probable beta-glucosidase K (bglK) of Emericella nidulans (strain FGSC A4 / ATCC 38163 / CBS 112.46 / NRRL 194 / M139) (Aspergillus nidulans).